The sequence spans 339 residues: Biotin synthase (339 aa).

In terms of domain architecture, Radical SAM core spans 51 to 278 (SEVELATLLS…KARVRLSAGR (228 aa)). The [4Fe-4S] cluster site is built by C66, C70, and C73. [2Fe-2S] cluster contacts are provided by C110, C141, C201, and R273.

It belongs to the radical SAM superfamily. Biotin synthase family. In terms of assembly, homodimer. [4Fe-4S] cluster is required as a cofactor. Requires [2Fe-2S] cluster as cofactor.

It catalyses the reaction (4R,5S)-dethiobiotin + (sulfur carrier)-SH + 2 reduced [2Fe-2S]-[ferredoxin] + 2 S-adenosyl-L-methionine = (sulfur carrier)-H + biotin + 2 5'-deoxyadenosine + 2 L-methionine + 2 oxidized [2Fe-2S]-[ferredoxin]. Its pathway is cofactor biosynthesis; biotin biosynthesis; biotin from 7,8-diaminononanoate: step 2/2. Catalyzes the conversion of dethiobiotin (DTB) to biotin by the insertion of a sulfur atom into dethiobiotin via a radical-based mechanism. The polypeptide is Biotin synthase (Herminiimonas arsenicoxydans).